The primary structure comprises 327 residues: Spermidine/putrescine import ATP-binding protein PotA (327 aa).

Residues 5–235 (IKVEAVEKHF…PKTLFVATFI (231 aa)) form the ABC transporter domain. 37 to 44 (GPSGCGKT) lines the ATP pocket.

This sequence belongs to the ABC transporter superfamily. Spermidine/putrescine importer (TC 3.A.1.11.1) family. In terms of assembly, the complex is composed of two ATP-binding proteins (PotA), two transmembrane proteins (PotB and PotC) and a solute-binding protein (PotD).

The protein localises to the cell membrane. It carries out the reaction ATP + H2O + polyamine-[polyamine-binding protein]Side 1 = ADP + phosphate + polyamineSide 2 + [polyamine-binding protein]Side 1.. Functionally, part of the ABC transporter complex PotABCD involved in spermidine/putrescine import. Responsible for energy coupling to the transport system. The protein is Spermidine/putrescine import ATP-binding protein PotA of Bacillus thuringiensis (strain Al Hakam).